The primary structure comprises 226 residues: ATP synthase F(0) complex subunit a (226 aa).

6 helical membrane-spanning segments follow: residues Pro12–Pro32, Trp68–Leu88, Gln97–Phe117, Ile138–Val158, Ile164–Ile184, and Ala189–Ile209.

It belongs to the ATPase A chain family. Component of the ATP synthase complex composed at least of ATP5F1A/subunit alpha, ATP5F1B/subunit beta, ATP5MC1/subunit c (homooctomer), MT-ATP6/subunit a, MT-ATP8/subunit 8, ATP5ME/subunit e, ATP5MF/subunit f, ATP5MG/subunit g, ATP5MK/subunit k, ATP5MJ/subunit j, ATP5F1C/subunit gamma, ATP5F1D/subunit delta, ATP5F1E/subunit epsilon, ATP5PF/subunit F6, ATP5PB/subunit b, ATP5PD/subunit d, ATP5PO/subunit OSCP. ATP synthase complex consists of a soluble F(1) head domain (subunits alpha(3) and beta(3)) - the catalytic core - and a membrane F(0) domain - the membrane proton channel (subunits c, a, 8, e, f, g, k and j). These two domains are linked by a central stalk (subunits gamma, delta, and epsilon) rotating inside the F1 region and a stationary peripheral stalk (subunits F6, b, d, and OSCP). Interacts with DNAJC30; interaction is direct.

It is found in the mitochondrion inner membrane. It catalyses the reaction H(+)(in) = H(+)(out). Its function is as follows. Subunit a, of the mitochondrial membrane ATP synthase complex (F(1)F(0) ATP synthase or Complex V) that produces ATP from ADP in the presence of a proton gradient across the membrane which is generated by electron transport complexes of the respiratory chain. ATP synthase complex consist of a soluble F(1) head domain - the catalytic core - and a membrane F(1) domain - the membrane proton channel. These two domains are linked by a central stalk rotating inside the F(1) region and a stationary peripheral stalk. During catalysis, ATP synthesis in the catalytic domain of F(1) is coupled via a rotary mechanism of the central stalk subunits to proton translocation. With the subunit c (ATP5MC1), forms the proton-conducting channel in the F(0) domain, that contains two crucial half-channels (inlet and outlet) that facilitate proton movement from the mitochondrial intermembrane space (IMS) into the matrix. Protons are taken up via the inlet half-channel and released through the outlet half-channel, following a Grotthuss mechanism. This Dasypus novemcinctus (Nine-banded armadillo) protein is ATP synthase F(0) complex subunit a.